A 187-amino-acid polypeptide reads, in one-letter code: Probable chemoreceptor glutamine deamidase CheD (187 aa).

The interval 164–187 is disordered; it reads APQDVRRPTPPPMPAVASGDVDLF.

This sequence belongs to the CheD family.

It carries out the reaction L-glutaminyl-[protein] + H2O = L-glutamyl-[protein] + NH4(+). In terms of biological role, probably deamidates glutamine residues to glutamate on methyl-accepting chemotaxis receptors (MCPs), playing an important role in chemotaxis. This chain is Probable chemoreceptor glutamine deamidase CheD, found in Caulobacter vibrioides (strain ATCC 19089 / CIP 103742 / CB 15) (Caulobacter crescentus).